The primary structure comprises 1102 residues: Carbamoyl phosphate synthase large chain (1102 aa).

The interval 1 to 408 (MPKRTDIQSV…ALQKALRSLE (408 aa)) is carboxyphosphate synthetic domain. Residues Arg129, Arg175, Gly181, Gly182, Glu214, Ile216, Glu221, Gly247, Val248, His249, Gln291, and Glu305 each contribute to the ATP site. The ATP-grasp 1 domain maps to 138-334 (AVRAKIGHGE…IAKIAAKLAV (197 aa)). Positions 291, 305, and 307 each coordinate Mg(2+). Mn(2+)-binding residues include Gln291, Glu305, and Asn307. The segment at 409 to 551 (KKGSQFTFVG…YFYSSYDEES (143 aa)) is oligomerization domain. Residues 552–954 (EVAPREKPAV…AYAKSQAGAY (403 aa)) are carbamoyl phosphate synthetic domain. One can recognise an ATP-grasp 2 domain in the interval 682–873 (GQVLAEAGLP…LAKAAARISL (192 aa)). ATP is bound by residues Arg718, Arg757, Leu759, Glu764, Gly789, Ile790, His791, Ser792, Gln832, and Glu844. Mg(2+)-binding residues include Gln832, Glu844, and Asn846. Mn(2+) contacts are provided by Gln832, Glu844, and Asn846. An MGS-like domain is found at 955–1100 (GPLPTKGRAF…QEHAEHLTAA (146 aa)). Residues 955-1102 (GPLPTKGRAF…HAEHLTAARD (148 aa)) form an allosteric domain region.

The protein belongs to the CarB family. Composed of two chains; the small (or glutamine) chain promotes the hydrolysis of glutamine to ammonia, which is used by the large (or ammonia) chain to synthesize carbamoyl phosphate. Tetramer of heterodimers (alpha,beta)4. The cofactor is Mg(2+). Mn(2+) serves as cofactor.

The enzyme catalyses hydrogencarbonate + L-glutamine + 2 ATP + H2O = carbamoyl phosphate + L-glutamate + 2 ADP + phosphate + 2 H(+). It carries out the reaction hydrogencarbonate + NH4(+) + 2 ATP = carbamoyl phosphate + 2 ADP + phosphate + 2 H(+). It functions in the pathway amino-acid biosynthesis; L-arginine biosynthesis; carbamoyl phosphate from bicarbonate: step 1/1. The protein operates within pyrimidine metabolism; UMP biosynthesis via de novo pathway; (S)-dihydroorotate from bicarbonate: step 1/3. Functionally, large subunit of the glutamine-dependent carbamoyl phosphate synthetase (CPSase). CPSase catalyzes the formation of carbamoyl phosphate from the ammonia moiety of glutamine, carbonate, and phosphate donated by ATP, constituting the first step of 2 biosynthetic pathways, one leading to arginine and/or urea and the other to pyrimidine nucleotides. The large subunit (synthetase) binds the substrates ammonia (free or transferred from glutamine from the small subunit), hydrogencarbonate and ATP and carries out an ATP-coupled ligase reaction, activating hydrogencarbonate by forming carboxy phosphate which reacts with ammonia to form carbamoyl phosphate. This Streptomyces avermitilis (strain ATCC 31267 / DSM 46492 / JCM 5070 / NBRC 14893 / NCIMB 12804 / NRRL 8165 / MA-4680) protein is Carbamoyl phosphate synthase large chain.